Consider the following 563-residue polypeptide: Type 2 DNA topoisomerase 6 subunit B (563 aa).

ATP-binding positions include Asn-46, Asp-78, 99–100, 109–116, and Lys-471; these read TK and GQQGIGIS.

The protein belongs to the TOP6B family. As to quaternary structure, homodimer. Heterotetramer of two Top6A and two Top6B chains.

The catalysed reaction is ATP-dependent breakage, passage and rejoining of double-stranded DNA.. Its function is as follows. Relaxes both positive and negative superturns and exhibits a strong decatenase activity. In Thermococcus onnurineus (strain NA1), this protein is Type 2 DNA topoisomerase 6 subunit B.